Here is a 154-residue protein sequence, read N- to C-terminus: Small ribosomal subunit protein bS6 (154 aa).

The segment at 107–154 (KSDDRERGFRGPKPPGRFESGRKRGYDDREEFRARAGGDDDDRGLDQE) is disordered. Over residues 125–154 (ESGRKRGYDDREEFRARAGGDDDDRGLDQE) the composition is skewed to basic and acidic residues.

Belongs to the bacterial ribosomal protein bS6 family.

Functionally, binds together with bS18 to 16S ribosomal RNA. This chain is Small ribosomal subunit protein bS6, found in Granulibacter bethesdensis (strain ATCC BAA-1260 / CGDNIH1).